Here is a 96-residue protein sequence, read N- to C-terminus: uncharacterized protein (96 aa).

This is an uncharacterized protein from Invertebrate iridescent virus 6 (IIV-6).